Here is a 27-residue protein sequence, read N- to C-terminus: Caerulein precursor fragment R2 (27 aa).

Expressed by the skin glands.

The protein localises to the secreted. Functionally, antimicrobial peptide. This is Caerulein precursor fragment R2 from Xenopus ruwenzoriensis (Uganda clawed frog).